The primary structure comprises 406 residues: Serine hydroxymethyltransferase (406 aa).

Residues L111 and 115–117 (GHL) each bind (6S)-5,6,7,8-tetrahydrofolate. K220 is modified (N6-(pyridoxal phosphate)lysine).

Belongs to the SHMT family. In terms of assembly, homodimer. It depends on pyridoxal 5'-phosphate as a cofactor.

It localises to the cytoplasm. It catalyses the reaction (6R)-5,10-methylene-5,6,7,8-tetrahydrofolate + glycine + H2O = (6S)-5,6,7,8-tetrahydrofolate + L-serine. It participates in one-carbon metabolism; tetrahydrofolate interconversion. The protein operates within amino-acid biosynthesis; glycine biosynthesis; glycine from L-serine: step 1/1. Catalyzes the reversible interconversion of serine and glycine with tetrahydrofolate (THF) serving as the one-carbon carrier. This reaction serves as the major source of one-carbon groups required for the biosynthesis of purines, thymidylate, methionine, and other important biomolecules. Also exhibits THF-independent aldolase activity toward beta-hydroxyamino acids, producing glycine and aldehydes, via a retro-aldol mechanism. The chain is Serine hydroxymethyltransferase from Mycoplasma pneumoniae (strain ATCC 29342 / M129 / Subtype 1) (Mycoplasmoides pneumoniae).